Reading from the N-terminus, the 192-residue chain is ATP synthase subunit b 2 (192 aa).

The chain crosses the membrane as a helical span at residues 39 to 59 (SGFLAQLIWLALAFGLLYYLM).

Belongs to the ATPase B chain family. In terms of assembly, F-type ATPases have 2 components, F(1) - the catalytic core - and F(0) - the membrane proton channel. F(1) has five subunits: alpha(3), beta(3), gamma(1), delta(1), epsilon(1). F(0) has three main subunits: a(1), b(2) and c(10-14). The alpha and beta chains form an alternating ring which encloses part of the gamma chain. F(1) is attached to F(0) by a central stalk formed by the gamma and epsilon chains, while a peripheral stalk is formed by the delta and b chains.

The protein localises to the cell inner membrane. Its function is as follows. F(1)F(0) ATP synthase produces ATP from ADP in the presence of a proton or sodium gradient. F-type ATPases consist of two structural domains, F(1) containing the extramembraneous catalytic core and F(0) containing the membrane proton channel, linked together by a central stalk and a peripheral stalk. During catalysis, ATP synthesis in the catalytic domain of F(1) is coupled via a rotary mechanism of the central stalk subunits to proton translocation. Functionally, component of the F(0) channel, it forms part of the peripheral stalk, linking F(1) to F(0). The b'-subunit is a diverged and duplicated form of b found in plants and photosynthetic bacteria. This chain is ATP synthase subunit b 2 (atpF2), found in Methylobacterium radiotolerans (strain ATCC 27329 / DSM 1819 / JCM 2831 / NBRC 15690 / NCIMB 10815 / 0-1).